Reading from the N-terminus, the 97-residue chain is MNWLTATADGVRLTLHVQPGARRTEVAGLHGDALKIRLAAPPVDGKANACLLAFLARGLGVSRSAVTLKSGDCSRHKVVDIRGITPEAAAGLLPVKE.

It belongs to the UPF0235 family.

This is UPF0235 protein LHK_03181 from Laribacter hongkongensis (strain HLHK9).